The following is a 999-amino-acid chain: MHIIKPVWLTHGGKLVVHDSSSSWHGPLTPTLLSTGERKDFEVYSCDVSPDGSRLVTAAGDGYVRIWSTEAIRNTDDSSQKPKQLASMSNHSGTIHTVRFSPNGKYLASGADDKIVCIYTLDANPPSHSTFGWSYDSSILVSVGLDSKVVVWSGHTFEKLKTLSVHQSHVKGITFDPANKYFATASDDRTVKIFRFTSPAPNSTAHDQMNNFVLETTISAPFQNSPLTAYFRRCSWSPDGMHIAAANAVNGPVSSVAIINRGSWDGDINLIGHEAPVEVCAFSPRLYSTQPPNKQTPDNQGQAVTVIACAGGDKSLSIWITTNPRPIVVAQELAAKSISDLAWSPDGTCLYATALDGTILAVRFEDGDLGYPMAMEENEKSLTKFGTNRRGAGITETTDGLLLEEKSKAGELKGVEGRMGALMGDGHASAEATVNGKALSSNGAAPAQGTSPTADAQKTQTNGTTTPAAQEADKPDPYQAKLERLKQRPTYTKDGKKRIAPLLVSGAGAAESSLPQARLMASVSSQVKADTPQSIVDLSKPFDGLPKGGLAALLFGNKRKLAQLEGDEDGHVEKRVALASQNGATPIMANTPDGLLPAQPQPPATGQQQTPEYIRPAVTNPCMAISQLRLAVPKVRSQIVRAIDSTGKPTEPPGASSEANKSRVDLVFEARNPSPASLTGRAVDREPVRLTLFRGEQPLWQDFLPRTVLLVTGNQSMWAAACEDGSVYIWTPAGRRLVSALVLEAQPVILECNGPWILCISAVGMCYVWNVKHLSSPHPPISLQPVLDAAVHTLGAHPSSAPAITNARINSEGRVIVALSNGEGYAYSPSMYTWQRMSEAWWAVGSQYWNTTEAPVGNLQSTDSQDKDAKAAVSAGIIPFLERNTTNETLLRGRAYFLQRLIKVLLSREGYESFESSVSIAHLENRLAAALSLGAKEEFRLYLSMYAKRIGAEGLKNKVEELLKGLIGGKHRDLQRVTVPYAKLLGVVDESEAGDAMET.

WD repeat units follow at residues 15–54 (LVVH…DGSR), 69–108 (TEAI…KYLA), 130–169 (TFGW…HQSH), 172–211 (GITF…QMNN), 233–276 (RCSW…HEAP), 279–339 (VCAF…KSIS), and 343–384 (WSPD…SLTK). Over residues 439-468 (LSSNGAAPAQGTSPTADAQKTQTNGTTTPA) the composition is skewed to polar residues. The disordered stretch occupies residues 439–476 (LSSNGAAPAQGTSPTADAQKTQTNGTTTPAAQEADKPD).

Belongs to the WD repeat HIR1 family.

It is found in the nucleus. Required for replication-independent chromatin assembly and for the periodic repression of histone gene transcription during the cell cycle. In Aspergillus terreus (strain NIH 2624 / FGSC A1156), this protein is Protein hir1 (hir1).